A 79-amino-acid polypeptide reads, in one-letter code: RNA-binding protein Hfq (79 aa).

In terms of domain architecture, Sm spans 10 to 70 (DVFLNTVRKQ…ISTIMPGQPV (61 aa)).

It belongs to the Hfq family. Homohexamer.

Functionally, RNA chaperone that binds small regulatory RNA (sRNAs) and mRNAs to facilitate mRNA translational regulation in response to envelope stress, environmental stress and changes in metabolite concentrations. Also binds with high specificity to tRNAs. This chain is RNA-binding protein Hfq, found in Bartonella henselae (strain ATCC 49882 / DSM 28221 / CCUG 30454 / Houston 1) (Rochalimaea henselae).